The primary structure comprises 315 residues: Methionyl-tRNA formyltransferase (315 aa).

An N-terminal domain region spans residues S2–D189. Residue S113–P116 participates in (6S)-5,6,7,8-tetrahydrofolate binding. The segment at K210–V315 is C-terminal domain.

This sequence belongs to the Fmt family.

The enzyme catalyses L-methionyl-tRNA(fMet) + (6R)-10-formyltetrahydrofolate = N-formyl-L-methionyl-tRNA(fMet) + (6S)-5,6,7,8-tetrahydrofolate + H(+). In terms of biological role, attaches a formyl group to the free amino group of methionyl-tRNA(fMet). The formyl group appears to play a dual role in the initiator identity of N-formylmethionyl-tRNA by promoting its recognition by IF2 and preventing the misappropriation of this tRNA by the elongation apparatus. The chain is Methionyl-tRNA formyltransferase from Escherichia coli O157:H7.